The following is a 363-amino-acid chain: Protein RecA (363 aa).

79–86 (GPESSGKT) is a binding site for ATP.

This sequence belongs to the RecA family.

The protein localises to the cytoplasm. In terms of biological role, can catalyze the hydrolysis of ATP in the presence of single-stranded DNA, the ATP-dependent uptake of single-stranded DNA by duplex DNA, and the ATP-dependent hybridization of homologous single-stranded DNAs. It interacts with LexA causing its activation and leading to its autocatalytic cleavage. This Borrelia duttonii (strain Ly) protein is Protein RecA.